A 171-amino-acid chain; its full sequence is GTP-dependent dephospho-CoA kinase (171 aa).

4 residues coordinate GTP: aspartate 49, valine 51, aspartate 68, and glutamate 122.

This sequence belongs to the GTP-dependent DPCK family.

The catalysed reaction is 3'-dephospho-CoA + GTP = GDP + CoA + H(+). It functions in the pathway cofactor biosynthesis; coenzyme A biosynthesis. Functionally, catalyzes the GTP-dependent phosphorylation of the 3'-hydroxyl group of dephosphocoenzyme A to form coenzyme A (CoA). This is GTP-dependent dephospho-CoA kinase from Hyperthermus butylicus (strain DSM 5456 / JCM 9403 / PLM1-5).